The primary structure comprises 168 residues: Gastrula zinc finger protein XlCGF7.1 (168 aa).

6 C2H2-type zinc fingers span residues 6–28 (FTCT…QRTH), 34–56 (FTCT…LKCH), 62–84 (FMCT…RKIH), 90–112 (YICT…QTVH), 118–140 (FTCS…QKIH), and 146–168 (FKCN…ERIH).

The protein belongs to the krueppel C2H2-type zinc-finger protein family.

Its subcellular location is the nucleus. In terms of biological role, may be involved in transcriptional regulation. This Xenopus laevis (African clawed frog) protein is Gastrula zinc finger protein XlCGF7.1.